A 61-amino-acid polypeptide reads, in one-letter code: Large ribosomal subunit protein uL30 (61 aa).

Belongs to the universal ribosomal protein uL30 family. In terms of assembly, part of the 50S ribosomal subunit.

The protein is Large ribosomal subunit protein uL30 of Chlorobium luteolum (strain DSM 273 / BCRC 81028 / 2530) (Pelodictyon luteolum).